Consider the following 277-residue polypeptide: Large ribosomal subunit protein uL2 (277 aa).

2 disordered regions span residues 28-55 (EPEKSLTHHKHSKQGRNNRGVVTSRHRG) and 207-277 (KAGR…RTQG). 3 stretches are compositionally biased toward basic residues: residues 34-43 (THHKHSKQGR), 209-220 (GRTRHRGQRPHV), and 255-265 (LGRKTRNKKKR).

Belongs to the universal ribosomal protein uL2 family. In terms of assembly, part of the 50S ribosomal subunit. Forms a bridge to the 30S subunit in the 70S ribosome.

Its function is as follows. One of the primary rRNA binding proteins. Required for association of the 30S and 50S subunits to form the 70S ribosome, for tRNA binding and peptide bond formation. It has been suggested to have peptidyltransferase activity; this is somewhat controversial. Makes several contacts with the 16S rRNA in the 70S ribosome. The sequence is that of Large ribosomal subunit protein uL2 from Microcystis aeruginosa (strain NIES-843 / IAM M-2473).